Consider the following 194-residue polypeptide: Imidazoleglycerol-phosphate dehydratase (194 aa).

The protein belongs to the imidazoleglycerol-phosphate dehydratase family.

It is found in the cytoplasm. The enzyme catalyses D-erythro-1-(imidazol-4-yl)glycerol 3-phosphate = 3-(imidazol-4-yl)-2-oxopropyl phosphate + H2O. Its pathway is amino-acid biosynthesis; L-histidine biosynthesis; L-histidine from 5-phospho-alpha-D-ribose 1-diphosphate: step 6/9. In Lactiplantibacillus plantarum (strain ATCC BAA-793 / NCIMB 8826 / WCFS1) (Lactobacillus plantarum), this protein is Imidazoleglycerol-phosphate dehydratase.